A 294-amino-acid chain; its full sequence is Nucleotide-binding protein Smlt1108 (294 aa).

An ATP-binding site is contributed by 16–23 (GLSGSGKS). 69-72 (DVRG) is a GTP binding site.

This sequence belongs to the RapZ-like family.

Functionally, displays ATPase and GTPase activities. This Stenotrophomonas maltophilia (strain K279a) protein is Nucleotide-binding protein Smlt1108.